The chain runs to 245 residues: Carbohydrate deacetylase (245 aa).

Positions 59 and 121 each coordinate Mg(2+).

This sequence belongs to the YdjC deacetylase family. Homodimer. It depends on Mg(2+) as a cofactor.

Functionally, probably catalyzes the deacetylation of acetylated carbohydrates an important step in the degradation of oligosaccharides. In Clostridium beijerinckii (strain ATCC 51743 / NCIMB 8052) (Clostridium acetobutylicum), this protein is Carbohydrate deacetylase.